Consider the following 180-residue polypeptide: NAD(P)H-quinone oxidoreductase subunit J (180 aa).

Positions 1-16 are enriched in polar residues; that stretch reads MNEETQTSELTNTDQG. The interval 1–23 is disordered; that stretch reads MNEETQTSELTNTDQGPQIEPGP.

Belongs to the complex I 30 kDa subunit family. In terms of assembly, NDH-1 can be composed of about 15 different subunits; different subcomplexes with different compositions have been identified which probably have different functions.

Its subcellular location is the cellular thylakoid membrane. It catalyses the reaction a plastoquinone + NADH + (n+1) H(+)(in) = a plastoquinol + NAD(+) + n H(+)(out). It carries out the reaction a plastoquinone + NADPH + (n+1) H(+)(in) = a plastoquinol + NADP(+) + n H(+)(out). In terms of biological role, NDH-1 shuttles electrons from an unknown electron donor, via FMN and iron-sulfur (Fe-S) centers, to quinones in the respiratory and/or the photosynthetic chain. The immediate electron acceptor for the enzyme in this species is believed to be plastoquinone. Couples the redox reaction to proton translocation, and thus conserves the redox energy in a proton gradient. Cyanobacterial NDH-1 also plays a role in inorganic carbon-concentration. The chain is NAD(P)H-quinone oxidoreductase subunit J from Prochlorococcus marinus (strain MIT 9211).